The following is a 201-amino-acid chain: High mobility group protein homolog 068R (201 aa).

2 consecutive DNA-binding regions (HMG box) follow at residues 70-138 and 143-201; these read PKRN…ELEK and TPSK…KAAK.

It belongs to the IIV-6 401R family.

The protein localises to the host nucleus. This is High mobility group protein homolog 068R from Invertebrate iridescent virus 3 (IIV-3).